The sequence spans 410 residues: Chloroacetanilide N-alkylformylase, ferredoxin reductase component (410 aa).

Residues G14, D36, K49, V82, R130, D279, and V298 each coordinate FAD.

It belongs to the FAD-dependent oxidoreductase family. The chloroacetanilide N-alkylformylase multicomponent enzyme system is composed of an oxygenase component (CndA) and an electron transfer component formed by a ferredoxin reductase (CndC1) and a ferredoxin (CndB1). In vitro, chloroacetanilide N-alkylformylase assays in which CndB1 is substituted for CndB2 demonstrate that the two enzymes possess nearly identical activities. FAD is required as a cofactor.

The enzyme catalyses 2 reduced [2Fe-2S]-[ferredoxin] + NAD(+) + H(+) = 2 oxidized [2Fe-2S]-[ferredoxin] + NADH. In terms of biological role, component of the chloroacetanilide N-alkylformylase multicomponent enzyme system involved in the degradation of chloroacetanilide herbicides (N-alkoxyalkyl-N-chloroacetyl-substituted aniline derivatives). In vitro, catalyzes the transfers of electrons from ferredoxin (CndB1) to NADH. N-dealkylase utilizes NADH, but not NADPH, as the electron donor. This is Chloroacetanilide N-alkylformylase, ferredoxin reductase component from Rhizorhabdus wittichii (strain DC-6 / KACC 16600) (Sphingomonas wittichii).